The following is a 604-amino-acid chain: Probable translation initiation factor IF-2 (604 aa).

One can recognise a tr-type G domain in the interval 18–232 (IRTPIVCVLG…VLIGLAQRYM (215 aa)). The interval 27 to 34 (GHVDHGKT) is G1. A GTP-binding site is contributed by 27–34 (GHVDHGKT). The tract at residues 52 to 56 (AITQH) is G2. The tract at residues 88 to 91 (DTPG) is G3. GTP is bound by residues 88–92 (DTPGH) and 142–145 (TKLD). The segment at 142-145 (TKLD) is G4. The G5 stretch occupies residues 210–212 (SAH).

The protein belongs to the TRAFAC class translation factor GTPase superfamily. Classic translation factor GTPase family. IF-2 subfamily.

Functionally, function in general translation initiation by promoting the binding of the formylmethionine-tRNA to ribosomes. Seems to function along with eIF-2. This is Probable translation initiation factor IF-2 from Methanospirillum hungatei JF-1 (strain ATCC 27890 / DSM 864 / NBRC 100397 / JF-1).